Here is a 380-residue protein sequence, read N- to C-terminus: 12-oxophytodienoate reductase 1 (380 aa).

Residues 35-37 (PLT), Ala-68, and Gln-110 contribute to the FMN site. 182 to 185 (HGAH) lines the substrate pocket. Tyr-187 (proton donor) is an active-site residue. Residue Arg-234 coordinates FMN. Arg-275 contacts substrate. Residues Gly-305 and 326–327 (GR) contribute to the FMN site.

Belongs to the NADH:flavin oxidoreductase/NADH oxidase family. Requires FMN as cofactor.

The catalysed reaction is (1S,2S)-OPC-8 + NADP(+) = (9S,13S,15Z)-12-oxophyto-10,15-dienoate + NADPH + H(+). It functions in the pathway lipid metabolism; oxylipin biosynthesis. Probably involved in the biosynthesis or metabolism of oxylipin signaling molecules. In vitro, reduces cis(-)-12-oxophytodienoic acid (cis(-)-OPDA) and to cis(-)-OPC-8:0. This is 12-oxophytodienoate reductase 1 from Oryza sativa subsp. japonica (Rice).